The following is a 273-amino-acid chain: Nitrogenase iron protein (273 aa).

8-15 is an ATP binding site; sequence GKGGIGKS. A [4Fe-4S] cluster-binding site is contributed by cysteine 95. Arginine 98 bears the ADP-ribosylarginine; by dinitrogenase reductase ADP-ribosyltransferase mark. Cysteine 130 provides a ligand contact to [4Fe-4S] cluster.

This sequence belongs to the NifH/BchL/ChlL family. Homodimer. Requires [4Fe-4S] cluster as cofactor. Post-translationally, the reversible ADP-ribosylation of Arg-98 inactivates the nitrogenase reductase and regulates nitrogenase activity.

The catalysed reaction is N2 + 8 reduced [2Fe-2S]-[ferredoxin] + 16 ATP + 16 H2O = H2 + 8 oxidized [2Fe-2S]-[ferredoxin] + 2 NH4(+) + 16 ADP + 16 phosphate + 6 H(+). Functionally, the key enzymatic reactions in nitrogen fixation are catalyzed by the nitrogenase complex, which has 2 components: the iron protein and the molybdenum-iron protein. This Methanosarcina mazei (strain ATCC BAA-159 / DSM 3647 / Goe1 / Go1 / JCM 11833 / OCM 88) (Methanosarcina frisia) protein is Nitrogenase iron protein.